The chain runs to 183 residues: Small ribosomal subunit protein bS20c (183 aa).

The transit peptide at 1-68 (MAAISMACVS…FQRRGFSVVC (68 aa)) directs the protein to the chloroplast. Residues 79–99 (AAKRTRQAETRRLRNKARKSE) are disordered.

In terms of assembly, component of the chloroplast small ribosomal subunit (SSU). Mature 70S chloroplast ribosomes of higher plants consist of a small (30S) and a large (50S) subunit. The 30S small subunit contains 1 molecule of ribosomal RNA (16S rRNA) and 24 different proteins. The 50S large subunit contains 3 rRNA molecules (23S, 5S and 4.5S rRNA) and 33 different proteins.

Its subcellular location is the plastid. The protein resides in the chloroplast. Functionally, component of the chloroplast ribosome (chloro-ribosome), a dedicated translation machinery responsible for the synthesis of chloroplast genome-encoded proteins, including proteins of the transcription and translation machinery and components of the photosynthetic apparatus. In Spinacia oleracea (Spinach), this protein is Small ribosomal subunit protein bS20c (RPS20).